The primary structure comprises 303 residues: Polyisoprenyl-teichoic acid--peptidoglycan teichoic acid transferase TagU (303 aa).

Residues 1-4 lie on the Cytoplasmic side of the membrane; sequence MKKK. Residues 5–25 traverse the membrane as a helical; Signal-anchor for type II membrane protein segment; that stretch reads ILFWVLGILGVLIIGGGIYAY. Residues 26–303 lie on the Extracellular side of the membrane; the sequence is NVYSSVSNTL…KLRSHLEVTK (278 aa).

The protein belongs to the LytR/CpsA/Psr (LCP) family.

The protein resides in the cell membrane. Its pathway is cell wall biogenesis. May catalyze the final step in cell wall teichoic acid biosynthesis, the transfer of the anionic cell wall polymers (APs) from their lipid-linked precursor to the cell wall peptidoglycan (PG). The polypeptide is Polyisoprenyl-teichoic acid--peptidoglycan teichoic acid transferase TagU (Bacillus cereus (strain AH820)).